The sequence spans 930 residues: Isoleucine--tRNA ligase (930 aa).

The disordered stretch occupies residues 1–21 (MRVKDTLNLGKTKFPMRGRLP). A 'HIGH' region motif is present at residues 57–67 (PYANGPIHIGH). Residue Glu555 coordinates L-isoleucyl-5'-AMP. Positions 596–600 (KMSKS) match the 'KMSKS' region motif. Residue Lys599 participates in ATP binding. 4 residues coordinate Zn(2+): Cys889, Cys892, Cys909, and Cys912.

Belongs to the class-I aminoacyl-tRNA synthetase family. IleS type 1 subfamily. As to quaternary structure, monomer. Zn(2+) is required as a cofactor.

Its subcellular location is the cytoplasm. It catalyses the reaction tRNA(Ile) + L-isoleucine + ATP = L-isoleucyl-tRNA(Ile) + AMP + diphosphate. In terms of biological role, catalyzes the attachment of isoleucine to tRNA(Ile). As IleRS can inadvertently accommodate and process structurally similar amino acids such as valine, to avoid such errors it has two additional distinct tRNA(Ile)-dependent editing activities. One activity is designated as 'pretransfer' editing and involves the hydrolysis of activated Val-AMP. The other activity is designated 'posttransfer' editing and involves deacylation of mischarged Val-tRNA(Ile). This is Isoleucine--tRNA ligase from Limosilactobacillus fermentum (strain NBRC 3956 / LMG 18251) (Lactobacillus fermentum).